The chain runs to 369 residues: 4-hydroxy-3-methylbut-2-en-1-yl diphosphate synthase (flavodoxin) (369 aa).

Positions 270, 273, 305, and 312 each coordinate [4Fe-4S] cluster.

This sequence belongs to the IspG family. [4Fe-4S] cluster serves as cofactor.

The enzyme catalyses (2E)-4-hydroxy-3-methylbut-2-enyl diphosphate + oxidized [flavodoxin] + H2O + 2 H(+) = 2-C-methyl-D-erythritol 2,4-cyclic diphosphate + reduced [flavodoxin]. It participates in isoprenoid biosynthesis; isopentenyl diphosphate biosynthesis via DXP pathway; isopentenyl diphosphate from 1-deoxy-D-xylulose 5-phosphate: step 5/6. Its function is as follows. Converts 2C-methyl-D-erythritol 2,4-cyclodiphosphate (ME-2,4cPP) into 1-hydroxy-2-methyl-2-(E)-butenyl 4-diphosphate. This Pseudomonas syringae pv. tomato (strain ATCC BAA-871 / DC3000) protein is 4-hydroxy-3-methylbut-2-en-1-yl diphosphate synthase (flavodoxin).